The chain runs to 478 residues: Monocarboxylate transporter 2 (478 aa).

The Cytoplasmic segment spans residues 1-15 (MPPMPSAPPVHPPPD). Residues 16-36 (GGWGWIVVGAAFISIGFSYAF) traverse the membrane as a helical segment. Residues 37 to 59 (PKAVTVFFKEIQQIFHTTYSEIA) lie on the Extracellular side of the membrane. A helical transmembrane segment spans residues 60 to 80 (WISSIMLAVMYAGGPVSSVLV). At 81 to 89 (NKYGSRPVV) the chain is on the cytoplasmic side. A helical membrane pass occupies residues 90–110 (IAGGLLCCLGMVLASFSSSVV). Residues 111–115 (QLYLT) are Extracellular-facing. Residues 116–136 (MGFITGLGLAFNLQPALTIIG) form a helical membrane-spanning segment. Residues 137-148 (KYFYRKRPMANG) lie on the Cytoplasmic side of the membrane. The helical transmembrane segment at 149-169 (LAMAGSPVFLSSLAPFNQYLF) threads the bilayer. Residues 170 to 173 (NTFG) lie on the Extracellular side of the membrane. The helical transmembrane segment at 174 to 194 (WKGSFLILGSLLLNACVAGSL) threads the bilayer. Residues 195–246 (MRPLGPNQTTSKSKNKTGKTEDDSSPKKIKTKKSTWEKVNKYLDFSLFKHRG) lie on the Cytoplasmic side of the membrane. The disordered stretch occupies residues 200–224 (PNQTTSKSKNKTGKTEDDSSPKKIK). Residues 247–267 (FLIYLSGNVIMFLGFFAPIIF) form a helical membrane-spanning segment. Residues 268 to 282 (LAPYAKDQGIDEYSA) lie on the Extracellular side of the membrane. Residues 283 to 303 (AFLLSVMAFVDMFARPSVGLI) form a helical membrane-spanning segment. Residues 304-312 (ANSKYIRPR) are Cytoplasmic-facing. The helical transmembrane segment at 313–333 (IQYFFSFAIMFNGVCHLLCPL) threads the bilayer. The Extracellular segment spans residues 334–338 (AQDYT). A helical transmembrane segment spans residues 339-359 (SLVLYAVFFGLGFGSVSSVLF). Residues 360-373 (ETLMDLVGAPRFSS) lie on the Cytoplasmic side of the membrane. Residues 374–394 (AVGLVTIVECGPVLLGPPLAG) form a helical membrane-spanning segment. At 395–406 (KLVDLTGEYKYM) the chain is on the extracellular side. Residues 407 to 427 (YMSCGAIVVAASVWLLIGNAI) form a helical membrane-spanning segment. The Cytoplasmic segment spans residues 428-478 (NYRLLAKERKEENARQKTRESEPLSKSKHSEDVNVKVSNAQSVTSERETNI). Residues 437-461 (KEENARQKTRESEPLSKSKHSEDVN) are compositionally biased toward basic and acidic residues. A disordered region spans residues 437–478 (KEENARQKTRESEPLSKSKHSEDVNVKVSNAQSVTSERETNI).

Belongs to the major facilitator superfamily. Monocarboxylate porter (TC 2.A.1.13) family. Homodimer. Interacts with GRID2IP. Interacts with EMB; interaction mediates SLC16A7 targeting to the plasma membrane. Interacts with isoform 2 of BSG. Detected in heart and in blood lymphocytes and monocytes (at protein level). High expression in testis, moderate to low in spleen, heart, kidney, pancreas, skeletal muscle, brain and leukocyte. Restricted expression in normal tissues, but widely expressed in cancer cells.

It localises to the cell membrane. The protein localises to the basolateral cell membrane. Its subcellular location is the cytoplasm. It catalyses the reaction pyruvate(out) + H(+)(out) = pyruvate(in) + H(+)(in). It carries out the reaction 3-methyl-2-oxobutanoate(out) + H(+)(out) = 3-methyl-2-oxobutanoate(in) + H(+)(in). The enzyme catalyses (S)-lactate(in) + H(+)(in) = (S)-lactate(out) + H(+)(out). The catalysed reaction is acetoacetate(out) + H(+)(out) = acetoacetate(in) + H(+)(in). It catalyses the reaction (R)-3-hydroxybutanoate(out) + H(+)(out) = (R)-3-hydroxybutanoate(in) + H(+)(in). It carries out the reaction 4-methyl-2-oxopentanoate(out) + H(+)(out) = 4-methyl-2-oxopentanoate(in) + H(+)(in). The enzyme catalyses (S)-3-hydroxybutanoate(out) + H(+)(out) = (S)-3-hydroxybutanoate(in) + H(+)(in). Transport activity exhibits steep dependence on substrate concentration. Substrate concentration sensitivity of SLC16A7 arises from the strong inter-subunit cooperativity of the SLC16A7 dimer during transport. Inhibited by AR-C155858. Functionally, proton-coupled monocarboxylate symporter. Catalyzes the rapid transport across the plasma membrane of monocarboxylates such as L-lactate, pyruvate and ketone bodies, acetoacetate, beta-hydroxybutyrate and acetate. Dimerization is functionally required and both subunits work cooperatively in transporting substrate. The polypeptide is Monocarboxylate transporter 2 (Homo sapiens (Human)).